Reading from the N-terminus, the 121-residue chain is Inner membrane protein YhaH (121 aa).

Over Met1–Tyr23 the chain is Periplasmic. A helical membrane pass occupies residues Trp24–Leu44. Residues Gly45–Ala49 are Cytoplasmic-facing. The helical transmembrane segment at Gly50 to Val70 threads the bilayer. The Periplasmic portion of the chain corresponds to Gln71 to Arg80. The chain crosses the membrane as a helical span at residues Ser81 to Phe101. Residues Asn102–Pro121 are Cytoplasmic-facing.

This sequence to E.coli YhaI.

The protein resides in the cell inner membrane. This Escherichia coli O157:H7 protein is Inner membrane protein YhaH (yhaH).